A 193-amino-acid chain; its full sequence is Putative 3-methyladenine DNA glycosylase (193 aa).

Belongs to the DNA glycosylase MPG family.

The chain is Putative 3-methyladenine DNA glycosylase from Nitrosospira multiformis (strain ATCC 25196 / NCIMB 11849 / C 71).